The chain runs to 234 residues: Large ribosomal subunit protein uL1 (234 aa).

The protein belongs to the universal ribosomal protein uL1 family. In terms of assembly, part of the 50S ribosomal subunit.

Its function is as follows. Binds directly to 23S rRNA. The L1 stalk is quite mobile in the ribosome, and is involved in E site tRNA release. Protein L1 is also a translational repressor protein, it controls the translation of the L11 operon by binding to its mRNA. This Campylobacter fetus subsp. fetus (strain 82-40) protein is Large ribosomal subunit protein uL1.